A 118-amino-acid chain; its full sequence is UPF0212 protein HQ_2663A (118 aa).

This sequence belongs to the UPF0212 family.

This Haloquadratum walsbyi (strain DSM 16790 / HBSQ001) protein is UPF0212 protein HQ_2663A.